The sequence spans 141 residues: Transcriptional regulator MraZ (141 aa).

2 SpoVT-AbrB domains span residues 5–47 (EYNH…PNEE) and 75–118 (AADC…SKER).

This sequence belongs to the MraZ family. In terms of assembly, forms oligomers.

Its subcellular location is the cytoplasm. The protein resides in the nucleoid. This is Transcriptional regulator MraZ from Lachnoclostridium phytofermentans (strain ATCC 700394 / DSM 18823 / ISDg) (Clostridium phytofermentans).